Consider the following 141-residue polypeptide: Putative RING-H2 finger protein ATL62 (141 aa).

Residues 14 to 32 form a helical membrane-spanning segment; the sequence is FFAILTVFYSIFRCCLAYC. The RING-type; degenerate zinc finger occupies 79–121; the sequence is CVVCLSKFIDEDKARVLPSCNHCFHFDFTDTWLHSDYTCPNCR.

This sequence belongs to the RING-type zinc finger family. ATL subfamily.

Its subcellular location is the membrane. The enzyme catalyses S-ubiquitinyl-[E2 ubiquitin-conjugating enzyme]-L-cysteine + [acceptor protein]-L-lysine = [E2 ubiquitin-conjugating enzyme]-L-cysteine + N(6)-ubiquitinyl-[acceptor protein]-L-lysine.. It participates in protein modification; protein ubiquitination. The protein is Putative RING-H2 finger protein ATL62 (ATL62) of Arabidopsis thaliana (Mouse-ear cress).